A 127-amino-acid chain; its full sequence is Protein B20 (127 aa).

Positions 86-127 are disordered; the sequence is DRTGMNSESDSESDNISIKTEYENEYEFYDETQDQSTQHNDL. Residues 108–118 show a composition bias toward acidic residues; that stretch reads ENEYEFYDETQ.

This chain is Protein B20, found in Homo sapiens (Human).